Reading from the N-terminus, the 403-residue chain is tRNA pseudouridine synthase 4 (403 aa).

Aspartate 75 serves as the catalytic Nucleophile.

This sequence belongs to the pseudouridine synthase TruB family.

It is found in the nucleus. Its subcellular location is the mitochondrion. The enzyme catalyses uridine(55) in tRNA = pseudouridine(55) in tRNA. It catalyses the reaction a uridine in mRNA = a pseudouridine in mRNA. Responsible for synthesis of pseudouridine from uracil-55 in the psi GC loop of transfer RNAs. Also catalyzes pseudouridylation of mRNAs with the consensus sequence 5'-GGUUCRA-3'. The sequence is that of tRNA pseudouridine synthase 4 (PUS4) from Saccharomyces cerevisiae (strain ATCC 204508 / S288c) (Baker's yeast).